The chain runs to 323 residues: Arginase-1 (323 aa).

The segment at 1 to 27 is disordered; that stretch reads MSSKPKSLEIIGAPFSKGQPRGGVEKG. Serine 7 bears the Phosphoserine mark. Lysine 17 is modified (N6-succinyllysine). Phosphoserine occurs at positions 62 and 72. The residue at position 75 (lysine 75) is an N6-succinyllysine. The Mn(2+) site is built by histidine 101, aspartate 124, histidine 126, and aspartate 128. Substrate is bound by residues 126–130 and 137–139; these read HTDIN and SGN. A Phosphoserine modification is found at serine 163. Residue aspartate 183 coordinates substrate. The residue at position 217 (serine 217) is a Phosphoserine. Mn(2+) contacts are provided by aspartate 232 and aspartate 234. Residues threonine 246 and glutamate 277 each contribute to the substrate site. Threonine 281 is subject to Phosphothreonine.

Belongs to the arginase family. In terms of assembly, homotrimer. Interacts with CMTM6. Mn(2+) is required as a cofactor. As to expression, expressed in macrophages. Expressed in precursor and mature group 2 innate lymphoid cells (ILC2s). Expressed in lung tumor-associated myeloid cells. Expressed in lung tumor-infiltrating dendritic cells.

It localises to the cytoplasm. Its subcellular location is the cytoplasmic granule. The enzyme catalyses L-arginine + H2O = urea + L-ornithine. The protein operates within nitrogen metabolism; urea cycle; L-ornithine and urea from L-arginine: step 1/1. Key element of the urea cycle converting L-arginine to urea and L-ornithine, which is further metabolized into metabolites proline and polyamides that drive collagen synthesis and bioenergetic pathways critical for cell proliferation, respectively; the urea cycle takes place primarily in the liver and, to a lesser extent, in the kidneys. Its function is as follows. Functions in L-arginine homeostasis in nonhepatic tissues characterized by the competition between nitric oxide synthase (NOS) and arginase for the available intracellular substrate arginine. Arginine metabolism is a critical regulator of innate and adaptive immune responses. Involved in an antimicrobial effector pathway in polymorphonuclear granulocytes (PMN). Upon PMN cell death is liberated from the phagolysosome and depletes arginine in the microenvironment leading to suppressed T cell and natural killer (NK) cell proliferation and cytokine secretion. In group 2 innate lymphoid cells (ILC2s) promotes acute type 2 inflammation in the lung and is involved in optimal ILC2 proliferation but not survival. Plays a role in the immune response of alternatively activated or M2 macrophages in processes such as wound healing and tissue regeneration, immune defense against multicellular pathogens and parasites, and immune suppression and allergic inflammation; the regulatory outcome seems to be organ specific. In tumor-infiltrating dendritic cells (DCs) and myeloid-derived suppressor cells (MDSCs) plays a role in suppression of T cell-mediated antitumor immunity. This Mus musculus (Mouse) protein is Arginase-1 (Arg1).